We begin with the raw amino-acid sequence, 85 residues long: CRISPR-associated endoribonuclease Cas2 (85 aa).

Aspartate 8 provides a ligand contact to Mg(2+).

This sequence belongs to the CRISPR-associated endoribonuclease Cas2 protein family. As to quaternary structure, homodimer, forms a heterotetramer with a Cas1 homodimer. Requires Mg(2+) as cofactor.

Functionally, CRISPR (clustered regularly interspaced short palindromic repeat), is an adaptive immune system that provides protection against mobile genetic elements (viruses, transposable elements and conjugative plasmids). CRISPR clusters contain sequences complementary to antecedent mobile elements and target invading nucleic acids. CRISPR clusters are transcribed and processed into CRISPR RNA (crRNA). Functions as a ssRNA-specific endoribonuclease. Involved in the integration of spacer DNA into the CRISPR cassette. The sequence is that of CRISPR-associated endoribonuclease Cas2 from Pyrococcus furiosus (strain ATCC 43587 / DSM 3638 / JCM 8422 / Vc1).